The primary structure comprises 529 residues: MLGFVGRVAAAPASGALRRLTPSASLPPAQLLLRAAPTAVHPVRDYAAQTSPSPKAGAATGRIVAVIGAVVDVQFDEGLPPILNALEVQGRETRLVLEVAQHLGESTVRTIAMDGTEGLVRGQKVLDSGAPIKIPVGPETLGRIMNVIGEPIDERGPIKTKQFAPIHAEAPEFMEMSVEQEILVTGIKVVDLLAPYAKGGKIGLFGGAGVGKTVLIMELINNVAKAHGGYSVFAGVGERTREGNDLYHEMIESGVINLKDATSKVALVYGQMNEPPGARARVALTGLTVAEYFRDQEGQDVLLFIDNIFRFTQAGSEVSALLGRIPSAVGYQPTLATDMGTMQERITTTKKGSITSVQAIYVPADDLTDPAPATTFAHLDATTVLSRAIAELGIYPAVDPLDSTSRIMDPNIVGSEHYDVARGVQKILQDYKSLQDIIAILGMDELSEEDKLTVSRARKIQRFLSQPFQVAEVFTGHMGKLVPLKETIKGFQQILAGEYDHLPEQAFYMVGPIEEAVAKADKLAEEHSS.

A mitochondrion-targeting transit peptide spans 1-47 (MLGFVGRVAAAPASGALRRLTPSASLPPAQLLLRAAPTAVHPVRDYA). The O-linked (GlcNAc) serine glycan is linked to Ser106. 3 positions are modified to N6-acetyllysine; alternate: Lys124, Lys133, and Lys161. N6-succinyllysine; alternate occurs at positions 124, 133, and 161. Residue Lys198 is modified to N6-acetyllysine. The ADP site is built by Gly209, Val210, Gly211, Lys212, Thr213, and Val214. Residue Gly209 participates in ATP binding. Phosphate is bound by residues Gly209, Val210, Gly211, Lys212, and Thr213. ATP is bound by residues Gly211, Lys212, Thr213, and Val214. Thr213 is a binding site for Mg(2+). Residue Glu238 coordinates Mg(2+). Arg239 is an ATP binding site. Lys259 and Lys264 each carry N6-acetyllysine; alternate. N6-succinyllysine; alternate is present on residues Lys259 and Lys264. At Thr312 the chain carries Phosphothreonine. Ser415 carries the post-translational modification Phosphoserine. An N6-acetyllysine modification is found at Lys426. Ser433 is modified (phosphoserine). N6-acetyllysine is present on residues Lys480 and Lys485. Position 522 is an N6-acetyllysine; alternate (Lys522). Lys522 is modified (N6-succinyllysine; alternate). A Phosphoserine modification is found at Ser529.

Belongs to the ATPase alpha/beta chains family. In terms of assembly, homotrimer. Component of the ATP synthase complex composed at least of ATP5F1A/subunit alpha, ATP5F1B/subunit beta, ATP5MC1/subunit c (homooctomer), MT-ATP6/subunit a, MT-ATP8/subunit 8, ATP5ME/subunit e, ATP5MF/subunit f, ATP5MG/subunit g, ATP5MK/subunit k, ATP5MJ/subunit j, ATP5F1C/subunit gamma, ATP5F1D/subunit delta, ATP5F1E/subunit epsilon, ATP5PF/subunit F6, ATP5PB/subunit b, ATP5PD/subunit d, ATP5PO/subunit OSCP. ATP synthase complex consists of a soluble F(1) head domain (subunits alpha(3) and beta(3)) - the catalytic core - and a membrane F(0) domain - the membrane proton channel (subunits c, a, 8, e, f, g, k and j). These two domains are linked by a central stalk (subunits gamma, delta, and epsilon) rotating inside the F1 region and a stationary peripheral stalk (subunits F6, b, d, and OSCP). Interacts with PPIF. Interacts with BCL2L1 isoform BCL-X(L); the interaction mediates the association of BCL2L1 isoform BCL-X(L) with the mitochondrial membrane F(1)F(0) ATP synthase and enhances neurons metabolic efficiency. Interacts with CLN5 and PPT1. Interacts with S100A1; this interaction increases F1-ATPase activity. Interacts with MTLN. Interacts with TTC5/STRAP; the interaction results in decreased mitochondrial ATP production. Mg(2+) is required as a cofactor.

The protein resides in the mitochondrion inner membrane. The enzyme catalyses ATP + H2O + 4 H(+)(in) = ADP + phosphate + 5 H(+)(out). Functionally, catalytic subunit beta, of the mitochondrial membrane ATP synthase complex (F(1)F(0) ATP synthase or Complex V) that produces ATP from ADP in the presence of a proton gradient across the membrane which is generated by electron transport complexes of the respiratory chain. ATP synthase complex consist of a soluble F(1) head domain - the catalytic core - and a membrane F(1) domain - the membrane proton channel. These two domains are linked by a central stalk rotating inside the F(1) region and a stationary peripheral stalk. During catalysis, ATP synthesis in the catalytic domain of F(1) is coupled via a rotary mechanism of the central stalk subunits to proton translocation. In vivo, can only synthesize ATP although its ATP hydrolase activity can be activated artificially in vitro. With the subunit alpha (ATP5F1A), forms the catalytic core in the F(1) domain. The protein is ATP synthase F(1) complex subunit beta, mitochondrial of Homo sapiens (Human).